The following is a 698-amino-acid chain: Elongation factor G (698 aa).

In terms of domain architecture, tr-type G spans 8–290; sequence ERYRNIGISA…AVIELLPSPV (283 aa). GTP-binding positions include 17–24, 88–92, and 142–145; these read AHIDAGKT, DTPGH, and NKMD.

Belongs to the TRAFAC class translation factor GTPase superfamily. Classic translation factor GTPase family. EF-G/EF-2 subfamily.

Its subcellular location is the cytoplasm. In terms of biological role, catalyzes the GTP-dependent ribosomal translocation step during translation elongation. During this step, the ribosome changes from the pre-translocational (PRE) to the post-translocational (POST) state as the newly formed A-site-bound peptidyl-tRNA and P-site-bound deacylated tRNA move to the P and E sites, respectively. Catalyzes the coordinated movement of the two tRNA molecules, the mRNA and conformational changes in the ribosome. The sequence is that of Elongation factor G from Aromatoleum aromaticum (strain DSM 19018 / LMG 30748 / EbN1) (Azoarcus sp. (strain EbN1)).